Consider the following 150-residue polypeptide: uncharacterized protein (150 aa).

This is an uncharacterized protein from Mycoplasma genitalium (strain ATCC 33530 / DSM 19775 / NCTC 10195 / G37) (Mycoplasmoides genitalium).